We begin with the raw amino-acid sequence, 257 residues long: Deoxyribose-phosphate aldolase (257 aa).

Catalysis depends on aspartate 102, which acts as the Proton donor/acceptor. The Schiff-base intermediate with acetaldehyde role is filled by lysine 166. The active-site Proton donor/acceptor is the lysine 198.

The protein belongs to the DeoC/FbaB aldolase family. DeoC type 2 subfamily.

The protein localises to the cytoplasm. It carries out the reaction 2-deoxy-D-ribose 5-phosphate = D-glyceraldehyde 3-phosphate + acetaldehyde. It functions in the pathway carbohydrate degradation; 2-deoxy-D-ribose 1-phosphate degradation; D-glyceraldehyde 3-phosphate and acetaldehyde from 2-deoxy-alpha-D-ribose 1-phosphate: step 2/2. Functionally, catalyzes a reversible aldol reaction between acetaldehyde and D-glyceraldehyde 3-phosphate to generate 2-deoxy-D-ribose 5-phosphate. The protein is Deoxyribose-phosphate aldolase of Shewanella amazonensis (strain ATCC BAA-1098 / SB2B).